Consider the following 369-residue polypeptide: CLIP domain-containing serine protease HP8 (369 aa).

The first 24 residues, 1-24, serve as a signal peptide directing secretion; that stretch reads MKTPFEKIRIISCILVIVSTNVVG. The propeptide occupies 25-81; it reads QKCNGGANCIPLEECTDLFQQLKQGNSPQLTRLLRGLHCGFEDLNSPKICCPPEFLA. A Clip domain is found at 26 to 75; that stretch reads KCNGGANCIPLEECTDLFQQLKQGNSPQLTRLLRGLHCGFEDLNSPKICC. Cystine bridges form between cysteine 27/cysteine 74, cysteine 33/cysteine 63, cysteine 39/cysteine 75, cysteine 105/cysteine 239, cysteine 142/cysteine 158, cysteine 186/cysteine 191, cysteine 286/cysteine 303, and cysteine 313/cysteine 344. Positions 113 to 368 constitute a Peptidase S1 domain; sequence IFGGIQTEID…FMDWILSKLE (256 aa). Catalysis depends on histidine 157, which acts as the Charge relay system. 4 residues coordinate Ca(2+): glutamate 177, asparagine 179, threonine 182, and aspartate 185. Asparagine 179 is a glycosylation site (N-linked (GlcNAc...) asparagine). Aspartate 219 (charge relay system) is an active-site residue. Serine 317 acts as the Charge relay system in catalysis.

Belongs to the peptidase S1 family. CLIP subfamily. In the active form, heterodimer of a light chain and a heavy chain; disulfide-linked. In terms of processing, proteolytically cleaved for activation. Cleavage produces a light chain and a catalytic heavy chain which remains covalently associated probably through an interchain disulfide bond. In terms of tissue distribution, in larvae, expressed in the fat body and hemocytes.

Its subcellular location is the secreted. The protein resides in the cytoplasm. With respect to regulation, inhibited by (p-amidinophenyl) methanesulfonyl fluoride, p-nitrophenyl-p'-guanidinobenzoate, D-phenylalanyl-L-prolyl-L-arginyl chloromethane, leupeptin, antipain and to a lesser extent by antithrombin III. Functionally, endopeptidase with selective post-Arg cleavage site. Functions in the innate immune response to fungal and Gram-positive bacterial infections. Upon pathogen infection promotes nodulation; a cellular defense response in which hemocytes surround and isolate invading pathogens forming aggregates called nodules. Involved in activating nodule formation in response to infection with M.luteus, E.coli or S.cerevisiae. Able to bind the microbes M.luteus, E.coli or S.cerevisiae. According to another report, does not bind microorganisms. The protein is CLIP domain-containing serine protease HP8 of Bombyx mori (Silk moth).